The chain runs to 240 residues: Probable transcriptional regulatory protein HPP12_0160 (240 aa).

This sequence belongs to the TACO1 family.

It localises to the cytoplasm. The polypeptide is Probable transcriptional regulatory protein HPP12_0160 (Helicobacter pylori (strain P12)).